The chain runs to 236 residues: Leucyl/phenylalanyl-tRNA--protein transferase (236 aa).

This sequence belongs to the L/F-transferase family.

It is found in the cytoplasm. It carries out the reaction N-terminal L-lysyl-[protein] + L-leucyl-tRNA(Leu) = N-terminal L-leucyl-L-lysyl-[protein] + tRNA(Leu) + H(+). The enzyme catalyses N-terminal L-arginyl-[protein] + L-leucyl-tRNA(Leu) = N-terminal L-leucyl-L-arginyl-[protein] + tRNA(Leu) + H(+). The catalysed reaction is L-phenylalanyl-tRNA(Phe) + an N-terminal L-alpha-aminoacyl-[protein] = an N-terminal L-phenylalanyl-L-alpha-aminoacyl-[protein] + tRNA(Phe). Functions in the N-end rule pathway of protein degradation where it conjugates Leu, Phe and, less efficiently, Met from aminoacyl-tRNAs to the N-termini of proteins containing an N-terminal arginine or lysine. This Shewanella pealeana (strain ATCC 700345 / ANG-SQ1) protein is Leucyl/phenylalanyl-tRNA--protein transferase.